We begin with the raw amino-acid sequence, 159 residues long: Ribosome maturation factor RimP (159 aa).

The protein belongs to the RimP family.

Its subcellular location is the cytoplasm. Functionally, required for maturation of 30S ribosomal subunits. In Streptococcus pneumoniae serotype 19F (strain G54), this protein is Ribosome maturation factor RimP.